Reading from the N-terminus, the 234-residue chain is Redox-sensing transcriptional repressor Rex (234 aa).

Residues 17 to 56 (TYIRVLEELEAQNVLRASSGELARRAGVTPFQVRKDLTYF) constitute a DNA-binding region (H-T-H motif). Residue 91 to 96 (GMGRLG) coordinates NAD(+).

The protein belongs to the transcriptional regulatory Rex family. As to quaternary structure, homodimer.

It localises to the cytoplasm. Its function is as follows. Modulates transcription in response to changes in cellular NADH/NAD(+) redox state. This is Redox-sensing transcriptional repressor Rex from Deinococcus radiodurans (strain ATCC 13939 / DSM 20539 / JCM 16871 / CCUG 27074 / LMG 4051 / NBRC 15346 / NCIMB 9279 / VKM B-1422 / R1).